The sequence spans 927 residues: Alpha-catenin-like protein hmp-1 (927 aa).

2 coiled-coil regions span residues 319–354 and 672–696; these read TREN…RRDD and QENQ…QIDI. Residues 901–927 form a disordered region; the sequence is RNEIETGRDSDDEELDRRHQQRINGRL.

The protein belongs to the vinculin/alpha-catenin family. Component of a core catenin-cadherin complex consisting of hmr-1, hmp-1 and hmp-2; the complex localizes to adherens junctions. May interact with hmp-2. In terms of tissue distribution, epidermal cells.

Its subcellular location is the cell junction. The protein localises to the adherens junction. It localises to the cytoplasm. Required for cell migration during body enclosure and cell shape changes during body elongation. Required for proper localization of other junctional components, such as pac-1. This is Alpha-catenin-like protein hmp-1 (hmp-1) from Caenorhabditis elegans.